Consider the following 867-residue polypeptide: Valine--tRNA ligase (867 aa).

The 'HIGH' region motif lies at 42–52 (PNITGKIHMGH). The short motif at 521-525 (KMSKS) is the 'KMSKS' region element. Lys524 is an ATP binding site. The stretch at 794–867 (LGTLIDVKSE…QIISDLEAKA (74 aa)) forms a coiled coil.

The protein belongs to the class-I aminoacyl-tRNA synthetase family. ValS type 1 subfamily. As to quaternary structure, monomer.

Its subcellular location is the cytoplasm. It carries out the reaction tRNA(Val) + L-valine + ATP = L-valyl-tRNA(Val) + AMP + diphosphate. Catalyzes the attachment of valine to tRNA(Val). As ValRS can inadvertently accommodate and process structurally similar amino acids such as threonine, to avoid such errors, it has a 'posttransfer' editing activity that hydrolyzes mischarged Thr-tRNA(Val) in a tRNA-dependent manner. In Fervidobacterium nodosum (strain ATCC 35602 / DSM 5306 / Rt17-B1), this protein is Valine--tRNA ligase.